The chain runs to 486 residues: N-succinylglutamate 5-semialdehyde dehydrogenase (486 aa).

220–225 is an NAD(+) binding site; it reads GSSRTG. Residues Glu-243 and Cys-277 contribute to the active site.

It belongs to the aldehyde dehydrogenase family. AstD subfamily.

The catalysed reaction is N-succinyl-L-glutamate 5-semialdehyde + NAD(+) + H2O = N-succinyl-L-glutamate + NADH + 2 H(+). The protein operates within amino-acid degradation; L-arginine degradation via AST pathway; L-glutamate and succinate from L-arginine: step 4/5. Its function is as follows. Catalyzes the NAD-dependent reduction of succinylglutamate semialdehyde into succinylglutamate. The polypeptide is N-succinylglutamate 5-semialdehyde dehydrogenase (Shewanella baltica (strain OS185)).